Reading from the N-terminus, the 508-residue chain is Photosystem II CP47 reaction center protein (508 aa).

A run of 6 helical transmembrane segments spans residues 21 to 36, 101 to 115, 140 to 156, 203 to 218, 237 to 252, and 457 to 472; these read SVHI…WAGS, IMFS…IWHW, GIHL…FGAF, IAAG…FHLS, VLSS…AFVV, and SFAL…HGAR.

This sequence belongs to the PsbB/PsbC family. PsbB subfamily. In terms of assembly, PSII is composed of 1 copy each of membrane proteins PsbA, PsbB, PsbC, PsbD, PsbE, PsbF, PsbH, PsbI, PsbJ, PsbK, PsbL, PsbM, PsbT, PsbX, PsbY, PsbZ, Psb30/Ycf12, at least 3 peripheral proteins of the oxygen-evolving complex and a large number of cofactors. It forms dimeric complexes. The cofactor is Binds multiple chlorophylls. PSII binds additional chlorophylls, carotenoids and specific lipids..

The protein resides in the plastid. It is found in the chloroplast thylakoid membrane. In terms of biological role, one of the components of the core complex of photosystem II (PSII). It binds chlorophyll and helps catalyze the primary light-induced photochemical processes of PSII. PSII is a light-driven water:plastoquinone oxidoreductase, using light energy to abstract electrons from H(2)O, generating O(2) and a proton gradient subsequently used for ATP formation. The protein is Photosystem II CP47 reaction center protein of Guizotia abyssinica (Niger).